Reading from the N-terminus, the 128-residue chain is MTTLKTMTRVQLGAMGEALAVDYLTSMGLRILNRNWRCRYGELDVIACDAATRTVVFVEVKTRTGDGYGGLAHAVTERKVRRLRRLAGLWLADQEERWAAVRIDVIGVRVGPKNSGRTPELTHLQGIG.

It belongs to the UPF0102 family.

The polypeptide is UPF0102 protein BCG_2919c (Mycobacterium bovis (strain BCG / Pasteur 1173P2)).